The following is a 107-amino-acid chain: Iron-binding protein IscA (107 aa).

Positions 35, 99, and 101 each coordinate Fe cation.

This sequence belongs to the HesB/IscA family. Homodimer; may form tetramers and higher multimers. Requires Fe cation as cofactor.

In terms of biological role, is able to transfer iron-sulfur clusters to apo-ferredoxin. Multiple cycles of [2Fe2S] cluster formation and transfer are observed, suggesting that IscA acts catalytically. Recruits intracellular free iron so as to provide iron for the assembly of transient iron-sulfur cluster in IscU in the presence of IscS, L-cysteine and the thioredoxin reductase system TrxA/TrxB. The protein is Iron-binding protein IscA of Serratia proteamaculans (strain 568).